Reading from the N-terminus, the 2155-residue chain is Alpha-tectorin (2155 aa).

Residues 1–24 (MNYSSLLRIWVSFIFALVRHQAQP) form the signal peptide. Asn34, Asn187, Asn215, Asn278, Asn455, Asn506, Asn528, and Asn560 each carry an N-linked (GlcNAc...) asparagine glycan. The region spanning 98 to 252 (PFWADVHNGI…GRWAFKVDGK (155 aa)) is the NIDO domain. The VWFC domain maps to 260–314 (CTSRGQFLRRGEVFWDDLNCTIKCRCLDFNNEIYCQEASCSPYEVCEPKGRFFYC). A VWFD 1 domain is found at 320–500 (STCVVFGEPH…RVYHADWKCG (181 aa)). Disulfide bonds link Cys322/Cys461 and Cys344/Cys499. In terms of domain architecture, TIL 1 spans 597 to 650 (CPSFSHYSVCTSSCPDTCSDLTASQNCATPCTEGCECNEGFVLSTSQCVPLHKC). Residues Asn670, Asn687, Asn813, Asn843, Asn855, Asn898, Asn920, Asn931, and Asn949 are each glycosylated (N-linked (GlcNAc...) asparagine). The VWFD 2 domain occupies 711–886 (TVCLLSQNQV…SWTTFEEICN (176 aa)). Cys713 and Cys849 are disulfide-bonded. Residues 984–1036 (CPENSHFEECMTCTETCETLALGPICVDSCSEGCQCDEGYALQGSQCVPRSEC) form the TIL 2 domain. N-linked (GlcNAc...) asparagine glycosylation is found at Asn1048, Asn1064, Asn1235, and Asn1364. In terms of domain architecture, VWFD 3 spans 1098–1278 (ASCIVSGYGH…SWVKRDTFCQ (181 aa)). 2 disulfide bridges follow: Cys1100–Cys1241 and Cys1122–Cys1277. Residues 1372-1425 (CPPNSHYESCVSVCQPRCAAIRLKSDCNHYCVEGCQCDAGYVLNGKSCILPHNC) enclose the TIL 3 domain. Residues 1485-1666 (SYCLAAGGGV…QKRPLAPSCN (182 aa)) enclose the VWFD 4 domain. 7 disulfides stabilise this stretch: Cys1487–Cys1622, Cys1509–Cys1665, Cys1717–Cys1775, Cys1741–Cys1784, Cys1786–Cys1818, Cys1806–Cys1898, and Cys1837–Cys1857. N-linked (GlcNAc...) asparagine glycosylation is found at Asn1538, Asn1565, Asn1756, Asn1772, Asn1794, Asn1851, Asn1864, Asn1880, Asn1920, and Asn1939. Residues 1805 to 2059 (TCKAAQMEVS…YSCKINCPQN (255 aa)) enclose the ZP domain. Cystine bridges form between Cys1980–Cys2040, Cys2001–Cys2056, and Cys2045–Cys2052. Residue Asn2091 is the site of GPI-anchor amidated asparagine attachment. The propeptide at 2092-2155 (GGCEQICTSR…HLIYKSGATS (64 aa)) is removed in mature form.

As to quaternary structure, may form homomeric filament after self-association or heteromeric filament after association with beta-tectorin. Interacts with CEACAM16. In terms of processing, 3 products of tectorin seem to exist: HMM, MMM and LMM. They may be generated by active processing or the result of proteolysis occurring between intrachain disulfide bonds. The presence of a hydrophobic C-terminus preceded by a potential cleavage site strongly suggests that tectorins are synthesized as glycosylphosphatidylinositol-linked, membrane-bound precursors. Tectorins are targeted to the apical surface of the inner ear epithelia by the lipid and proteolytically released into the extracellular compartment. As to expression, cochlea-specific.

Its subcellular location is the cell membrane. The protein localises to the secreted. The protein resides in the extracellular space. It localises to the extracellular matrix. One of the major non-collagenous components of the tectorial membrane. The tectorial membrane is an extracellular matrix of the inner ear that covers the neuroepithelium of the cochlea and contacts the stereocilia bundles of specialized sensory hair cells. Sound induces movement of these hair cells relative to the tectorial membrane, deflects the stereocilia and leads to fluctuations in hair-cell membrane potential, transducing sound into electrical signals. The protein is Alpha-tectorin (Tecta) of Mus musculus (Mouse).